Here is a 473-residue protein sequence, read N- to C-terminus: Sarcalumenin (473 aa).

Positions 1–20 (MRALVLLGCLLASLLFSGQA) are cleaved as a signal peptide. A Dynamin-type G domain is found at 90-331 (ITSKPMVLFL…IENRLENKIA (242 aa)). Positions 100–107 (GPWSVGKS) are G1 motif. A G2 motif region spans residues 128–129 (EP). Residues 190-193 (DTPG) are G3 motif. The interval 255 to 258 (NKAD) is G4 motif. Position 278 (Pro-278) is a region of interest, G5 motif. 2 N-linked (GlcNAc...) asparagine glycosylation sites follow: Asn-281 and Asn-389.

Belongs to the TRAFAC class dynamin-like GTPase superfamily. Dynamin/Fzo/YdjA family. Post-translationally, N-glycosylated.

Its subcellular location is the sarcoplasmic reticulum lumen. It localises to the sarcoplasmic reticulum membrane. This is Sarcalumenin (SRL) from Homo sapiens (Human).